We begin with the raw amino-acid sequence, 225 residues long: Cytidylate kinase (225 aa).

12–20 (GPSGAGKGT) serves as a coordination point for ATP.

The protein belongs to the cytidylate kinase family. Type 1 subfamily.

It is found in the cytoplasm. The enzyme catalyses CMP + ATP = CDP + ADP. The catalysed reaction is dCMP + ATP = dCDP + ADP. The protein is Cytidylate kinase of Edwardsiella ictaluri (strain 93-146).